Reading from the N-terminus, the 356-residue chain is UDP-N-acetylglucosamine--N-acetylmuramyl-(pentapeptide) pyrophosphoryl-undecaprenol N-acetylglucosamine transferase (356 aa).

Residues 12-14, Asn124, Arg163, Ser188, Ile242, and Gln287 each bind UDP-N-acetyl-alpha-D-glucosamine; that span reads TGG.

The protein belongs to the glycosyltransferase 28 family. MurG subfamily.

It localises to the cell inner membrane. It catalyses the reaction di-trans,octa-cis-undecaprenyl diphospho-N-acetyl-alpha-D-muramoyl-L-alanyl-D-glutamyl-meso-2,6-diaminopimeloyl-D-alanyl-D-alanine + UDP-N-acetyl-alpha-D-glucosamine = di-trans,octa-cis-undecaprenyl diphospho-[N-acetyl-alpha-D-glucosaminyl-(1-&gt;4)]-N-acetyl-alpha-D-muramoyl-L-alanyl-D-glutamyl-meso-2,6-diaminopimeloyl-D-alanyl-D-alanine + UDP + H(+). It participates in cell wall biogenesis; peptidoglycan biosynthesis. Functionally, cell wall formation. Catalyzes the transfer of a GlcNAc subunit on undecaprenyl-pyrophosphoryl-MurNAc-pentapeptide (lipid intermediate I) to form undecaprenyl-pyrophosphoryl-MurNAc-(pentapeptide)GlcNAc (lipid intermediate II). The chain is UDP-N-acetylglucosamine--N-acetylmuramyl-(pentapeptide) pyrophosphoryl-undecaprenol N-acetylglucosamine transferase from Pseudomonas syringae pv. syringae (strain B728a).